A 229-amino-acid chain; its full sequence is Potassium/proton antiporter CemA (229 aa).

3 consecutive transmembrane segments (helical) span residues 7–27 (FTPL…SFSF), 114–134 (LICF…LVIL), and 189–209 (ILSG…KYWI).

The protein belongs to the CemA family.

It is found in the plastid. It localises to the chloroplast inner membrane. The enzyme catalyses K(+)(in) + H(+)(out) = K(+)(out) + H(+)(in). Functionally, contributes to K(+)/H(+) antiport activity by supporting proton efflux to control proton extrusion and homeostasis in chloroplasts in a light-dependent manner to modulate photosynthesis. Prevents excessive induction of non-photochemical quenching (NPQ) under continuous-light conditions. Indirectly promotes efficient inorganic carbon uptake into chloroplasts. This Ipomoea purpurea (Common morning glory) protein is Potassium/proton antiporter CemA.